Consider the following 131-residue polypeptide: MQTLAQMDILVVDDDPDTRDLLRFMLEDEGAIVTVAPNAKEALSLLERELPKLLVSDVAMPEMDGFELIGRVRELPKGETLPAIALTAYAREEDRQAALRSGFNDYLTKPVDPLELIRLVQQYCLAFPPDA.

Positions 8–124 (DILVVDDDPD…ELIRLVQQYC (117 aa)) constitute a Response regulatory domain. 4-aspartylphosphate is present on D57.

This is an uncharacterized protein from Leptolyngbya boryana (Plectonema boryanum).